The following is a 200-amino-acid chain: Recombination protein RecR (200 aa).

The C4-type zinc finger occupies 57-72; that stretch reads CRQCRTLTEQELCPQC. In terms of domain architecture, Toprim spans 80–175; that stretch reads TQLCVVEGPT…VASRIAHGVP (96 aa).

It belongs to the RecR family.

May play a role in DNA repair. It seems to be involved in an RecBC-independent recombinational process of DNA repair. It may act with RecF and RecO. This is Recombination protein RecR from Pseudomonas putida (strain ATCC 700007 / DSM 6899 / JCM 31910 / BCRC 17059 / LMG 24140 / F1).